A 212-amino-acid polypeptide reads, in one-letter code: Pyridoxine/pyridoxamine 5'-phosphate oxidase (212 aa).

Residues 8 to 11 (RREY) and Lys-66 each bind substrate. Residues 61 to 66 (RIVLLK), 76 to 77 (FT), Arg-82, Lys-83, and Gln-105 contribute to the FMN site. Substrate is bound by residues Tyr-123, Arg-127, and Ser-131. FMN-binding positions include 140–141 (QS) and Trp-185. 191-193 (RLH) lines the substrate pocket. Arg-195 provides a ligand contact to FMN.

The protein belongs to the pyridoxamine 5'-phosphate oxidase family. As to quaternary structure, homodimer. The cofactor is FMN.

The enzyme catalyses pyridoxamine 5'-phosphate + O2 + H2O = pyridoxal 5'-phosphate + H2O2 + NH4(+). It carries out the reaction pyridoxine 5'-phosphate + O2 = pyridoxal 5'-phosphate + H2O2. It functions in the pathway cofactor metabolism; pyridoxal 5'-phosphate salvage; pyridoxal 5'-phosphate from pyridoxamine 5'-phosphate: step 1/1. It participates in cofactor metabolism; pyridoxal 5'-phosphate salvage; pyridoxal 5'-phosphate from pyridoxine 5'-phosphate: step 1/1. Catalyzes the oxidation of either pyridoxine 5'-phosphate (PNP) or pyridoxamine 5'-phosphate (PMP) into pyridoxal 5'-phosphate (PLP). The sequence is that of Pyridoxine/pyridoxamine 5'-phosphate oxidase from Shewanella frigidimarina (strain NCIMB 400).